An 857-amino-acid polypeptide reads, in one-letter code: DNA mismatch repair protein MutS (857 aa).

603 to 610 contributes to the ATP binding site; sequence GPNMAGKS.

The protein belongs to the DNA mismatch repair MutS family.

This protein is involved in the repair of mismatches in DNA. It is possible that it carries out the mismatch recognition step. This protein has a weak ATPase activity. This chain is DNA mismatch repair protein MutS, found in Methanothrix thermoacetophila (strain DSM 6194 / JCM 14653 / NBRC 101360 / PT) (Methanosaeta thermophila).